The chain runs to 434 residues: UPF0597 protein CLD_2616 (434 aa).

The protein belongs to the UPF0597 family.

The sequence is that of UPF0597 protein CLD_2616 from Clostridium botulinum (strain Okra / Type B1).